Consider the following 103-residue polypeptide: uncharacterized protein (103 aa).

This is an uncharacterized protein from Haemophilus influenzae (strain ATCC 51907 / DSM 11121 / KW20 / Rd).